The chain runs to 1886 residues: MPSTDSSTKGTQDVAIVGLSCRFSGSATSANKFWDMLCNGESGHSETPRFNPKGFSDPGFRKQNQSATAYGHFLQQDVGAFDSRFFGITPEEALAMDPQQRMMLEVAYEAFENAGMTIEQLAGSRTSCFIGSFTSDYREMLFRDADAAPRYTVTGTGVSMLANRVSWFFDLRGPSVALNTACSSSLVALHLARRSLQSGEADIAIVGGTNLMLGSEMFTFFSNLNFLSRDGLSRSFDASGEGYGRGEGVAAVILKRVDDAIQDNDNIRAVVRGTSTNQDGKTKAITLPSLDAQIDLIRSAYKEGGLSFNDTTYFEAHGTGTRRGDPVELEAISKTLCVDRPTNSKIIVGSVKSNVGHTEATAGLAGIIKAIYMLEKGIIPATINYSRPLPEFDLNSSLLTIPVETKPWPGTSVRRISINSFGFGGANAHAVLDDAPSYLASKSLGNGTKDANSNAPVLRTNGSLVNGNGANEDVQTSTEQLSFLFSGQDQQSLDRNFETMVQHIQTKSFSDSRSELQYLVDLAYTLSERRSRFKVRAEVVASSVTQLVSKIQERSFARVNNDLANTKKSIPAEERTCELKRRVLVDLPAYSWDHSSTYWAESRVSKEFRLRKHPQRSLIGAPQPSYGENEHIWRGYLRLSEEPWVKDHQVLGAIVYPAAGYIAMAIEAAQDIADKGRKVSRYNLRDVQFQAAAVIKEDVPLELIIQMRPHRSATRSTATSWLEFSISSCHNEKNLRDNCFGLLSIEYESSQDSSMALEQEREDALVLDKHRRTAEVCHTTQSPKALYQELASVGLNYGEAFQQISEISKTDGLSSCRVLSYVPDRFSTPNVIHPATLDCMIQTIFPALSGNHTPIHAAMVPTLLEEMSVASRTPNAAASFFRGSASARYSGAREMLAEFAMVDQDNKLSVTARGLHCTAISEATNPRTEQDEDGRRNICSQLMWVPATGVDSVEQVQNKATAPTQTFPPHDQDILILEGDHAYATALSDALMSLDQGKGSYIPIPKSFLRASLQDLEGKTCIATLEMGTSFLANAATDGFDTLKEIVRRCSRIIWVSSSTEPIGSVITGLARTMRNENAGLVFRTLQVPSQDMYDSENLAEVVSQLAASPTMDSEFRLEGGVLRVSRVLRDTKTDNMVASMARNGGPEIRLSTLSQVGTAQKLALPRLGMLDEIYFEADETANGLLRDEEVEIEVKASGVNFRDVLVVMGNVSDDLIGHEASGIISRVGSKVTSFRVGDRVCAIGHGCHRSVYRSTADLVHKIPDGMSFEEAATVPLVYTTAYTAIIDLARAQKGQSILIHAAAGGVGLAAIQIAIHLGLEIFATVSSEPKRQLLHDHGVMEDHIFNSRDISFAKGIMRTTTGRGVDIVLNSLAGEQLRQSWHCLAPFGNFVEIGIKDIITNSSLDMSPFAKDATFTAFEVINIMHKDPKRMANILRNVFQLLGNRSVKPVKPLLSKPISEVGEALRLLQAGKHMGKVALTWDRGQTIPMATTVVKPVLSDTATYVLVGGFGGLGQSIARMFADRGARHLCILSRSGARSREAVETINKLENQGVQVQSLACDVSDEGSLRTAFETCKIEMPPIRGVIQGAMVLRDISFEKMSHNQWHEALKPKVDGTWNLHKLMLRDLDFFIILSSFMGIFGSRTQGNYAAAGAYQDALAHHRRSQGLKAVSLDLGLMRDVSAFSKKEALSGPFKDWQEPFGLREVDVHGLLDHVIASEMTAPSTIPAQILTGFGTAREAEEAGIEPPYYLEDPRFSLLHTTIVEAQQDTATQQQPAATPPDLVAKHTTGDLLRQATSTEDVTDLVLEILIVKVAKHLEQNVANIDPEEPLYTYGVDSLVAIEFRNWIMKEFAADIALLDITAEEPMFDLVDKIVAKSKFLSVPS.

Residues 11–434 (TQDVAIVGLS…GANAHAVLDD (424 aa)) form the Ketosynthase family 3 (KS3) domain. Catalysis depends on for beta-ketoacyl synthase activity residues C182, H317, and H357. The tract at residues 483–568 (FLFSGQDQQS…VNNDLANTKK (86 aa)) is malonyl-CoA:ACP transacylase (MAT) domain. The N-terminal hotdog fold stretch occupies residues 616–750 (RSLIGAPQPS…GLLSIEYESS (135 aa)). A PKS/mFAS DH domain is found at 616-926 (RSLIGAPQPS…CTAISEATNP (311 aa)). Residues 618–924 (LIGAPQPSYG…LHCTAISEAT (307 aa)) form a dehydratase (DH) domain region. Catalysis depends on H648, which acts as the Proton acceptor; for dehydratase activity. The segment at 778–926 (HTTQSPKALY…CTAISEATNP (149 aa)) is C-terminal hotdog fold. D838 (proton donor; for dehydratase activity) is an active-site residue. The enoylreductase (ER) domain stretch occupies residues 1169 to 1480 (GMLDEIYFEA…AGKHMGKVAL (312 aa)). The segment at 1503–1681 (ATYVLVGGFG…VSLDLGLMRD (179 aa)) is catalytic ketoreductase (KRc) domain. The Carrier domain occupies 1802-1879 (DVTDLVLEIL…DLVDKIVAKS (78 aa)). Position 1839 is an O-(pantetheine 4'-phosphoryl)serine (S1839).

The protein operates within mycotoxin biosynthesis. Functionally, highly reducing polyketide synthase; part of the gene cluster that mediates the biosynthesis of the selective antifungal agent ascochitine, an o-quinone methide that plays a possible protective role against other microbial competitors in nature and is considered to be important for pathogenicity of legume-associated Didymella species. The pathway probably begins with the synthesis of a keto-aldehyde intermediate by the ascochitine non-reducing polyketide synthase pksAC from successive condensations of 4 malonyl-CoA units, presumably with a simple acetyl-CoA starter unit. Release of the keto-aldehyde intermediate is consistent with the presence of the C-terminal reductive release domain. The HR-PKS (orf7) probably makes a diketide starter unit which is passed to the non-reducing polyketide synthase pksAC for further extension, producing ascochital and ascochitine. The aldehyde dehydrogenase (orf1), the 2-oxoglutarate-dependent dioxygenase (orf3) and the dehydrogenase (orf9) are probably involved in subsequent oxidations of methyl groups to the carboxylic acid of the heterocyclic ring. The ascochitine gene cluster also includes a gene encoding a short peptide with a cupin domain (orf2) that is often found in secondary metabolite gene clusters and which function has still to be determined. The sequence is that of Highly reducing polyketide synthase from Didymella fabae (Leaf and pod spot disease fungus).